The following is a 367-amino-acid chain: Uroporphyrinogen decarboxylase (367 aa).

Residue methionine 1 is modified to N-acetylmethionine. Arginine 37, alanine 39, arginine 41, arginine 50, aspartate 86, tyrosine 164, serine 219, and histidine 339 together coordinate coproporphyrinogen I. Coproporphyrinogen III is bound by residues arginine 37, alanine 39, and arginine 41. Coproporphyrinogen III is bound by residues aspartate 86, tyrosine 164, serine 219, and histidine 339.

The protein belongs to the uroporphyrinogen decarboxylase family. As to quaternary structure, homodimer.

Its subcellular location is the cytoplasm. It localises to the cytosol. The enzyme catalyses uroporphyrinogen III + 4 H(+) = coproporphyrinogen III + 4 CO2. It catalyses the reaction uroporphyrinogen I + 4 H(+) = coproporphyrinogen I + 4 CO2. It functions in the pathway porphyrin-containing compound metabolism; protoporphyrin-IX biosynthesis; coproporphyrinogen-III from 5-aminolevulinate: step 4/4. Functionally, catalyzes the sequential decarboxylation of the four acetate side chains of uroporphyrinogen to form coproporphyrinogen and participates in the fifth step in the heme biosynthetic pathway. Isomer I or isomer III of uroporphyrinogen may serve as substrate, but only coproporphyrinogen III can ultimately be converted to heme. In vitro also decarboxylates pentacarboxylate porphyrinogen I. The chain is Uroporphyrinogen decarboxylase from Ovis aries (Sheep).